We begin with the raw amino-acid sequence, 1219 residues long: A disintegrin and metalloproteinase with thrombospondin motifs 18 (1219 aa).

The N-terminal stretch at 1-47 is a signal peptide; that stretch reads MECALLCLCALRAAGPGPPWGPAGLGRLAKALQLCCFCCASVAVALA. Residues 48-284 constitute a propeptide that is removed on maturation; the sequence is SDSGSSGGSG…EYGGTGRPRR (237 aa). N-linked (GlcNAc...) asparagine glycans are attached at residues asparagine 151 and asparagine 190. Positions 217–248 are disordered; it reads YPGSQRTYPGHSPSHTPPASQSQEPEYSHRRW. The segment covering 218 to 241 has biased composition (polar residues); the sequence is PGSQRTYPGHSPSHTPPASQSQEP. Positions 293–498 constitute a Peptidase M12B domain; sequence LNVETLVVAD…PQAGCLVDEP (206 aa). Cystine bridges form between cysteine 369–cysteine 420, cysteine 395–cysteine 402, cysteine 414–cysteine 493, cysteine 453–cysteine 477, cysteine 521–cysteine 546, cysteine 532–cysteine 553, cysteine 541–cysteine 572, cysteine 566–cysteine 577, cysteine 601–cysteine 638, cysteine 605–cysteine 643, and cysteine 616–cysteine 628. Histidine 436 provides a ligand contact to Zn(2+). Glutamate 437 is an active-site residue. Residues histidine 440 and histidine 446 each contribute to the Zn(2+) site. The region spanning 589-644 is the TSP type-1 1 domain; it reads HGQWSAWSKWSECSRTCGGGVKFQERHCSNPKPQYGGKYCPGSSRIYKLCNINPCP. N-linked (GlcNAc...) asparagine glycosylation is found at asparagine 745, asparagine 838, asparagine 865, and asparagine 909. TSP type-1 domains lie at 931 to 990, 991 to 1049, 1052 to 1116, and 1121 to 1176; these read CPAY…NSHA, CPPE…GRCP, NRLQ…RTCP, and AVAS…NFCP. The 38-residue stretch at 1182-1219 folds into the PLAC domain; sequence DDPSCVDFFSWCHLVPQHGVCNHKFYGKQCCRSCTRKS.

Zn(2+) is required as a cofactor. The precursor is cleaved by a furin endopeptidase. Post-translationally, glycosylated. Can be O-fucosylated by POFUT2 on a serine or a threonine residue found within the consensus sequence C1-X(2)-(S/T)-C2-G of the TSP type-1 repeat domains where C1 and C2 are the first and second cysteine residue of the repeat, respectively. Fucosylated repeats can then be further glycosylated by the addition of a beta-1,3-glucose residue by the glucosyltransferase, B3GALTL. Fucosylation mediates the efficient secretion of ADAMTS family members. Can also be C-glycosylated with one or two mannose molecules on tryptophan residues within the consensus sequence W-X-X-W of the TPRs, and N-glycosylated. These other glycosylations can also facilitate secretion.

The protein resides in the secreted. It localises to the extracellular space. Its subcellular location is the extracellular matrix. The protein is A disintegrin and metalloproteinase with thrombospondin motifs 18 (Adamts18) of Mus musculus (Mouse).